The chain runs to 382 residues: D-galactonate dehydratase (382 aa).

D183 contributes to the Mg(2+) binding site. The Proton donor role is filled by H185. Mg(2+)-binding residues include E209 and E235. H285 acts as the Proton acceptor in catalysis. The tract at residues 361–382 is disordered; sequence NENPPDWRNPVWRHSDGSIAEW.

Belongs to the mandelate racemase/muconate lactonizing enzyme family. GalD subfamily. Requires Mg(2+) as cofactor.

It carries out the reaction D-galactonate = 2-dehydro-3-deoxy-D-galactonate + H2O. The protein operates within carbohydrate acid metabolism; D-galactonate degradation; D-glyceraldehyde 3-phosphate and pyruvate from D-galactonate: step 1/3. Its function is as follows. Catalyzes the dehydration of D-galactonate to 2-keto-3-deoxy-D-galactonate. The protein is D-galactonate dehydratase of Xanthomonas euvesicatoria pv. vesicatoria (strain 85-10) (Xanthomonas campestris pv. vesicatoria).